Consider the following 117-residue polypeptide: G antigen 12H (117 aa).

A disordered region spans residues 1–117 (MSWRGRSTYY…PEEGEKQSQC (117 aa)). Composition is skewed to acidic residues over residues 32 to 45 (FSDE…EEGE) and 87 to 96 (ECEDGPDGQE). The span at 103-117 (EEVKTPEEGEKQSQC) shows a compositional bias: basic and acidic residues.

It belongs to the GAGE family.

This chain is G antigen 12H (GAGE12H), found in Homo sapiens (Human).